Consider the following 258-residue polypeptide: Isoprenyl transferase 1 (258 aa).

The active site involves D39. D39 serves as a coordination point for Mg(2+). Substrate-binding positions include G40–R43, W44, R52, H57, and S85–D87. Catalysis depends on N88, which acts as the Proton acceptor. Residues R92, R207, and R213–S215 contribute to the substrate site. Residue E226 participates in Mg(2+) binding.

This sequence belongs to the UPP synthase family. Homodimer. Mg(2+) is required as a cofactor.

In terms of biological role, catalyzes the condensation of isopentenyl diphosphate (IPP) with allylic pyrophosphates generating different type of terpenoids. This is Isoprenyl transferase 1 from Tropheryma whipplei (strain TW08/27) (Whipple's bacillus).